Reading from the N-terminus, the 198-residue chain is Protein uvp1 (198 aa).

The Resolvase/invertase-type recombinase catalytic domain occupies 1–140 (MIIGYARKST…SGLAAARARG (140 aa)). Residue S9 is the O-(5'-phospho-DNA)-serine intermediate of the active site. The H-T-H motif DNA-binding region spans 168–187 (VGAVAKRFNVSRMTIYRYTT).

Belongs to the site-specific recombinase resolvase family.

Its function is as follows. Cooperates with the mucAB genes in the DNA repair process. Could be a resolvase-invertase protein. The polypeptide is Protein uvp1 (uvp1) (Escherichia coli).